The primary structure comprises 183 residues: Probable calcium-binding protein CML47 (183 aa).

2 consecutive EF-hand domains span residues 112–147 (MGKEIVKEAFRLFDENQDGFIDENELKHVLSLLGYD) and 149–183 (CTKMECRKMVKVYDENRDGKIDFYEFVKLIEKSFS). Ca(2+) contacts are provided by Asp125, Asn127, Asp129, Glu136, Asp162, Asn164, Asp166, Lys168, and Glu173.

Functionally, potential calcium sensor. In Arabidopsis thaliana (Mouse-ear cress), this protein is Probable calcium-binding protein CML47 (CML47).